Reading from the N-terminus, the 257-residue chain is 3-methyl-2-oxobutanoate hydroxymethyltransferase (257 aa).

Residues Asp44 and Asp83 each coordinate Mg(2+). Residues 44-45 (DS), Asp83, and Lys113 each bind 3-methyl-2-oxobutanoate. Glu115 contributes to the Mg(2+) binding site. Catalysis depends on Glu182, which acts as the Proton acceptor.

This sequence belongs to the PanB family. In terms of assembly, homodecamer; pentamer of dimers. Mg(2+) serves as cofactor.

It localises to the cytoplasm. It catalyses the reaction 3-methyl-2-oxobutanoate + (6R)-5,10-methylene-5,6,7,8-tetrahydrofolate + H2O = 2-dehydropantoate + (6S)-5,6,7,8-tetrahydrofolate. Its pathway is cofactor biosynthesis; (R)-pantothenate biosynthesis; (R)-pantoate from 3-methyl-2-oxobutanoate: step 1/2. In terms of biological role, catalyzes the reversible reaction in which hydroxymethyl group from 5,10-methylenetetrahydrofolate is transferred onto alpha-ketoisovalerate to form ketopantoate. The sequence is that of 3-methyl-2-oxobutanoate hydroxymethyltransferase from Rippkaea orientalis (strain PCC 8801 / RF-1) (Cyanothece sp. (strain PCC 8801)).